The sequence spans 207 residues: Large ribosomal subunit protein uL4 (207 aa).

Residues 49-78 form a disordered region; sequence HAVKNRSAVSGGGRKPWRQKGTGRARQGSI.

The protein belongs to the universal ribosomal protein uL4 family. As to quaternary structure, part of the 50S ribosomal subunit.

Functionally, one of the primary rRNA binding proteins, this protein initially binds near the 5'-end of the 23S rRNA. It is important during the early stages of 50S assembly. It makes multiple contacts with different domains of the 23S rRNA in the assembled 50S subunit and ribosome. Forms part of the polypeptide exit tunnel. The sequence is that of Large ribosomal subunit protein uL4 from Streptococcus suis (strain 98HAH33).